We begin with the raw amino-acid sequence, 135 residues long: Large ribosomal subunit protein uL16c (135 aa).

The protein belongs to the universal ribosomal protein uL16 family. Part of the 50S ribosomal subunit.

The protein resides in the plastid. It localises to the chloroplast. The protein is Large ribosomal subunit protein uL16c of Lotus japonicus (Lotus corniculatus var. japonicus).